A 193-amino-acid chain; its full sequence is dCTP deaminase, dUMP-forming (193 aa).

Residues 101 to 106 (KSSLGR), Asp-119, 127 to 129 (TLE), Gln-148, Tyr-162, and Gln-174 each bind dCTP. Glu-129 serves as the catalytic Proton donor/acceptor.

The protein belongs to the dCTP deaminase family. Homotrimer.

The catalysed reaction is dCTP + 2 H2O = dUMP + NH4(+) + diphosphate. The protein operates within pyrimidine metabolism; dUMP biosynthesis; dUMP from dCTP: step 1/1. In terms of biological role, bifunctional enzyme that catalyzes both the deamination of dCTP to dUTP and the hydrolysis of dUTP to dUMP without releasing the toxic dUTP intermediate. This is dCTP deaminase, dUMP-forming from Bifidobacterium adolescentis (strain ATCC 15703 / DSM 20083 / NCTC 11814 / E194a).